The sequence spans 953 residues: Kinesin-like protein KIF23 (953 aa).

A Nuclear localization signal motif is present at residues 7 to 11 (KTVRK). The Kinesin motor domain occupies 25–436 (PVGVYCRVRP…MRFAEVTQEV (412 aa)). 112 to 119 (GVTGSGKT) is an ATP binding site. Phosphoserine is present on residues S155 and S160. Positions 542-618 (QEKLNEREKV…RRLEARLQGM (77 aa)) form a coiled coil. Glycyl lysine isopeptide (Lys-Gly) (interchain with G-Cter in SUMO2) cross-links involve residues K572 and K587. S606 is modified (phosphoserine). Glycyl lysine isopeptide (Lys-Gly) (interchain with G-Cter in SUMO2) cross-links involve residues K625, K648, K663, and K666. The tract at residues 658–695 (IVTEPKPEKPERPSRERDREKIIPRSVSPSPLPLSSNN) is disordered. Residues 662–680 (PKPEKPERPSRERDREKII) show a composition bias toward basic and acidic residues. The segment covering 681–693 (PRSVSPSPLPLSS) has biased composition (low complexity). 2 positions are modified to phosphoserine: S683 and S685. T739 carries the phosphothreonine modification. S807 carries the phosphoserine modification. Residues K816 and K847 each participate in a glycyl lysine isopeptide (Lys-Gly) (interchain with G-Cter in SUMO2) cross-link. Residue S860 is modified to Phosphoserine. Residues K867, K870, and K892 each participate in a glycyl lysine isopeptide (Lys-Gly) (interchain with G-Cter in SUMO2) cross-link. Disordered regions lie at residues 894–921 (ELPTGSRKRRSSTLAPAQPDGTESEWTD) and 934–953 (AGSQLGPGYQHHAQPKRKKP). Residue S904 is modified to Phosphoserine. Residue T920 is modified to Phosphothreonine. A Glycyl lysine isopeptide (Lys-Gly) (interchain with G-Cter in SUMO2) cross-link involves residue K949.

Belongs to the TRAFAC class myosin-kinesin ATPase superfamily. Kinesin family. As to quaternary structure, heterotetramer of two molecules each of RACGAP1 and KIF23. Found in the centralspindlin complex. Interacts with RACGAP1; the interaction is direct. Interacts with ECT2 and PRC1. Interacts with ANXA11 during cytokinesis. Interacts with BIRC6/bruce and USP8/UBPY. Interacts with ARF6, forming heterodimers and heterotetramers. In terms of processing, ubiquitinated. Deubiquitinated by USP8/UBPY. As to expression, detected in testis and ovary from newborn mice (at protein level). Detected in brain, spinal cord and small intestine.

The protein localises to the nucleus. It localises to the cytoplasm. Its subcellular location is the cytoskeleton. It is found in the spindle. The protein resides in the midbody. The protein localises to the midbody ring. Its function is as follows. Component of the centralspindlin complex that serves as a microtubule-dependent and Rho-mediated signaling required for the myosin contractile ring formation during the cell cycle cytokinesis. Essential for cytokinesis in Rho-mediated signaling. Required for the localization of ECT2 to the central spindle. Plus-end-directed motor enzyme that moves antiparallel microtubules in vitro. In Mus musculus (Mouse), this protein is Kinesin-like protein KIF23 (Kif23).